The primary structure comprises 441 residues: Glutamate-1-semialdehyde 2,1-aminomutase (441 aa).

The residue at position 273 (Lys-273) is an N6-(pyridoxal phosphate)lysine.

This sequence belongs to the class-III pyridoxal-phosphate-dependent aminotransferase family. HemL subfamily. Pyridoxal 5'-phosphate serves as cofactor.

It is found in the cytoplasm. It catalyses the reaction (S)-4-amino-5-oxopentanoate = 5-aminolevulinate. The protein operates within porphyrin-containing compound metabolism; protoporphyrin-IX biosynthesis; 5-aminolevulinate from L-glutamyl-tRNA(Glu): step 2/2. The sequence is that of Glutamate-1-semialdehyde 2,1-aminomutase from Pyrobaculum calidifontis (strain DSM 21063 / JCM 11548 / VA1).